We begin with the raw amino-acid sequence, 523 residues long: Synaptotagmin-10 (523 aa).

Residues 1–55 (MSFHKEDGVNSLCQKALHIVTELCFAGQVEWEKCSGIFPRDRGSQGGSSTDISVS) are Vesicular-facing. The cysteine motif stretch occupies residues 13–35 (CQKALHIVTELCFAGQVEWEKCS). A helical transmembrane segment spans residues 56 to 76 (LLAVVVSFCGLALLVVSLFVF). Residues 77-523 (WKLCWPCWKS…CPSPKPPSTP (447 aa)) lie on the Cytoplasmic side of the membrane. A Phosphothreonine modification is found at Thr-136. C2 domains follow at residues 231-352 (ICGK…TVWK) and 363-496 (DLGE…THWH). Ca(2+) is bound by residues Asp-262, Asp-268, Asp-320, Phe-321, Asp-322, Ser-325, Asp-328, Asp-394, Asp-400, Asp-454, and Asp-456.

The protein belongs to the synaptotagmin family. Homodimer; disulfide-linked via the cysteine motif. Can also form heterodimers with SYT3, SYT6, SYT7 and SYT9. Ca(2+) is required as a cofactor.

The protein localises to the cytoplasmic vesicle. It is found in the secretory vesicle membrane. In terms of biological role, ca(2+) sensor specifically required for the Ca(2+)-dependent exocytosis of secretory vesicles containing IGF1 in neurons of the olfactory bulb. Exocytosis of IGF1 is required for sensory perception of smell. Not involved in Ca(2+)-dependent synaptic vesicle exocytosis. Acts through Ca(2+) and phospholipid binding to the C2 domain: Ca(2+) induces binding of the C2-domains to phospholipid membranes and to assembled SNARE-complexes; both actions contribute to triggering exocytosis. This Pongo abelii (Sumatran orangutan) protein is Synaptotagmin-10 (SYT10).